Reading from the N-terminus, the 379-residue chain is Acyl-CoA dehydrogenase (379 aa).

This sequence belongs to the acyl-CoA dehydrogenase family. FAD is required as a cofactor.

The catalysed reaction is a 2,3-saturated acyl-CoA + A = a 2,3-dehydroacyl-CoA + AH2. The sequence is that of Acyl-CoA dehydrogenase (mmgC) from Bacillus subtilis (strain 168).